A 426-amino-acid chain; its full sequence is Gamma-glutamyl phosphate reductase (426 aa).

The protein belongs to the gamma-glutamyl phosphate reductase family.

It localises to the cytoplasm. It catalyses the reaction L-glutamate 5-semialdehyde + phosphate + NADP(+) = L-glutamyl 5-phosphate + NADPH + H(+). It participates in amino-acid biosynthesis; L-proline biosynthesis; L-glutamate 5-semialdehyde from L-glutamate: step 2/2. Catalyzes the NADPH-dependent reduction of L-glutamate 5-phosphate into L-glutamate 5-semialdehyde and phosphate. The product spontaneously undergoes cyclization to form 1-pyrroline-5-carboxylate. The polypeptide is Gamma-glutamyl phosphate reductase (Deinococcus geothermalis (strain DSM 11300 / CIP 105573 / AG-3a)).